The primary structure comprises 457 residues: Phosphomethylpyrimidine synthase (457 aa).

Residues asparagine 80, methionine 109, tyrosine 139, histidine 175, 195 to 197 (SRG), 236 to 239 (DSLR), and glutamate 275 each bind substrate. Histidine 279 lines the Zn(2+) pocket. Residue tyrosine 302 participates in substrate binding. Position 343 (histidine 343) interacts with Zn(2+). Positions 423, 426, and 431 each coordinate [4Fe-4S] cluster.

It belongs to the ThiC family. The cofactor is [4Fe-4S] cluster.

The catalysed reaction is 5-amino-1-(5-phospho-beta-D-ribosyl)imidazole + S-adenosyl-L-methionine = 4-amino-2-methyl-5-(phosphooxymethyl)pyrimidine + CO + 5'-deoxyadenosine + formate + L-methionine + 3 H(+). It participates in cofactor biosynthesis; thiamine diphosphate biosynthesis. Catalyzes the synthesis of the hydroxymethylpyrimidine phosphate (HMP-P) moiety of thiamine from aminoimidazole ribotide (AIR) in a radical S-adenosyl-L-methionine (SAM)-dependent reaction. The polypeptide is Phosphomethylpyrimidine synthase (Nostoc sp. (strain PCC 7120 / SAG 25.82 / UTEX 2576)).